The sequence spans 48 residues: Sperm protamine P1 (48 aa).

The protein belongs to the protamine P1 family. As to expression, testis.

Its subcellular location is the nucleus. The protein resides in the chromosome. Protamines substitute for histones in the chromatin of sperm during the haploid phase of spermatogenesis. They compact sperm DNA into a highly condensed, stable and inactive complex. The polypeptide is Sperm protamine P1 (PRM1) (Eptesicus fuscus (Big brown bat)).